A 339-amino-acid polypeptide reads, in one-letter code: Heme A synthase (339 aa).

Helical transmembrane passes span 7–27 (VIIW…VGGI), 92–112 (HRFI…YFLI), 126–146 (ILLG…KSGL), 159–179 (LHLT…LDLI), 199–219 (AIII…AGLI), 254–274 (VQFV…FLTF), 291–311 (ALLI…LYSV), and 312–332 (PLWL…TTTY). His258 provides a ligand contact to heme. His319 provides a ligand contact to heme.

The protein belongs to the COX15/CtaA family. Type 2 subfamily. In terms of assembly, interacts with CtaB. Heme b is required as a cofactor.

It localises to the cell membrane. The enzyme catalyses Fe(II)-heme o + 2 A + H2O = Fe(II)-heme a + 2 AH2. The protein operates within porphyrin-containing compound metabolism; heme A biosynthesis; heme A from heme O: step 1/1. Catalyzes the conversion of heme O to heme A by two successive hydroxylations of the methyl group at C8. The first hydroxylation forms heme I, the second hydroxylation results in an unstable dihydroxymethyl group, which spontaneously dehydrates, resulting in the formyl group of heme A. This Flavobacterium psychrophilum (strain ATCC 49511 / DSM 21280 / CIP 103535 / JIP02/86) protein is Heme A synthase.